Here is a 60-residue protein sequence, read N- to C-terminus: MAVPARHTSKAKKNKRRTHYKLTAPSVQFDETTGDYSRSHRVSLKGYYKGRKIAKAASAE.

Positions 1 to 21 (MAVPARHTSKAKKNKRRTHYK) are disordered. Residues 7–20 (HTSKAKKNKRRTHY) show a composition bias toward basic residues.

This sequence belongs to the bacterial ribosomal protein bL32 family.

In Streptococcus thermophilus (strain ATCC BAA-250 / LMG 18311), this protein is Large ribosomal subunit protein bL32.